The chain runs to 96 residues: Co-chaperonin GroES (96 aa).

It belongs to the GroES chaperonin family. Heptamer of 7 subunits arranged in a ring. Interacts with the chaperonin GroEL.

Its subcellular location is the cytoplasm. In terms of biological role, together with the chaperonin GroEL, plays an essential role in assisting protein folding. The GroEL-GroES system forms a nano-cage that allows encapsulation of the non-native substrate proteins and provides a physical environment optimized to promote and accelerate protein folding. GroES binds to the apical surface of the GroEL ring, thereby capping the opening of the GroEL channel. The protein is Co-chaperonin GroES of Wolbachia sp. subsp. Drosophila simulans (strain wRi).